The following is a 216-amino-acid chain: Small ribosomal subunit protein uS3c (216 aa).

A KH type-2 domain is found at 43–116 (IKNYVQKNMR…RLNIAITRVA (74 aa)).

It belongs to the universal ribosomal protein uS3 family. As to quaternary structure, part of the 30S ribosomal subunit.

It is found in the plastid. Its subcellular location is the chloroplast. The polypeptide is Small ribosomal subunit protein uS3c (rps3) (Drimys granadensis).